The sequence spans 271 residues: 3-methyl-2-oxobutanoate hydroxymethyltransferase (271 aa).

Aspartate 44 and aspartate 83 together coordinate Mg(2+). 3-methyl-2-oxobutanoate-binding positions include aspartate 44–serine 45, aspartate 83, and lysine 112. Residue glutamate 114 coordinates Mg(2+). The Proton acceptor role is filled by glutamate 181.

This sequence belongs to the PanB family. As to quaternary structure, homodecamer; pentamer of dimers. It depends on Mg(2+) as a cofactor.

It localises to the cytoplasm. It catalyses the reaction 3-methyl-2-oxobutanoate + (6R)-5,10-methylene-5,6,7,8-tetrahydrofolate + H2O = 2-dehydropantoate + (6S)-5,6,7,8-tetrahydrofolate. Its pathway is cofactor biosynthesis; coenzyme A biosynthesis. In terms of biological role, catalyzes the reversible reaction in which hydroxymethyl group from 5,10-methylenetetrahydrofolate is transferred onto alpha-ketoisovalerate to form ketopantoate. This Staphylothermus marinus (strain ATCC 43588 / DSM 3639 / JCM 9404 / F1) protein is 3-methyl-2-oxobutanoate hydroxymethyltransferase.